Reading from the N-terminus, the 257-residue chain is Imidazole glycerol phosphate synthase subunit HisF (257 aa).

Residues D12 and D131 contribute to the active site.

Belongs to the HisA/HisF family. Heterodimer of HisH and HisF.

The protein resides in the cytoplasm. The catalysed reaction is 5-[(5-phospho-1-deoxy-D-ribulos-1-ylimino)methylamino]-1-(5-phospho-beta-D-ribosyl)imidazole-4-carboxamide + L-glutamine = D-erythro-1-(imidazol-4-yl)glycerol 3-phosphate + 5-amino-1-(5-phospho-beta-D-ribosyl)imidazole-4-carboxamide + L-glutamate + H(+). It participates in amino-acid biosynthesis; L-histidine biosynthesis; L-histidine from 5-phospho-alpha-D-ribose 1-diphosphate: step 5/9. Its function is as follows. IGPS catalyzes the conversion of PRFAR and glutamine to IGP, AICAR and glutamate. The HisF subunit catalyzes the cyclization activity that produces IGP and AICAR from PRFAR using the ammonia provided by the HisH subunit. This is Imidazole glycerol phosphate synthase subunit HisF from Burkholderia multivorans (strain ATCC 17616 / 249).